A 466-amino-acid chain; its full sequence is Pyruvate kinase (466 aa).

R32 lines the substrate pocket. K(+) is bound by residues N34, S36, and D66. ATP is bound at residue 34 to 37 (NTSH). R73 lines the ATP pocket. Mg(2+) is bound at residue E219. The substrate site is built by G242, D243, and T275. D243 contacts Mg(2+).

Belongs to the pyruvate kinase family. As to quaternary structure, homotetramer. A divalent metal cation serves as cofactor.

The enzyme catalyses pyruvate + ATP = phosphoenolpyruvate + ADP + H(+). The protein operates within carbohydrate degradation; glycolysis; pyruvate from D-glyceraldehyde 3-phosphate: step 5/5. Allosterically activated by AMP and inhibited by ATP. The sequence is that of Pyruvate kinase (pyk) from Thermotoga maritima (strain ATCC 43589 / DSM 3109 / JCM 10099 / NBRC 100826 / MSB8).